We begin with the raw amino-acid sequence, 307 residues long: Cyclin-dependent kinase 5 activator 1 (307 aa).

G2 carries N-myristoyl glycine lipidation. S8 carries the post-translational modification Phosphoserine; by CDK5. Residues 97–136 (TFAQPPPAQPPAPPASQLSGSQTGGSSSVKKAPHPAVTSA) form a disordered region. A compositionally biased stretch (pro residues) spans 100–110 (QPPPAQPPAPP). A compositionally biased stretch (low complexity) spans 111 to 124 (ASQLSGSQTGGSSS). Phosphothreonine; by CDK5 is present on T138.

This sequence belongs to the cyclin-dependent kinase 5 activator family. Heterodimer composed of a catalytic subunit CDK5 and a regulatory subunit CDK5R1 (p25) and macromolecular complex composed of at least CDK5, CDK5R1 (p35) and CDK5RAP1 or CDK5RAP2 or CDK5RAP3. Only the heterodimer shows kinase activity. Interacts with EPHA4 and NGEF; may mediate the activation of NGEF by EPHA4. Interacts with RASGRF2. The complex p35/CDK5 interacts with CLOCK. Post-translationally, the p35 form is proteolytically cleaved by calpain, giving rise to the p25 form. P35 has a 5 to 10 fold shorter half-life compared to p25. The conversion results in deregulation of the CDK5 kinase: p25/CDK5 kinase displays an increased and altered tau phosphorylation in comparison to the p35/CDK5 kinase in vivo. In terms of processing, myristoylated. A proper myristoylation signal is essential for the proper distribution of p35. Ubiquitinated, leading to its degradation: degradation of p35 by proteasome results in down-regulation of CDK5 activity. During this process, CDK5 phosphorylates p35 and induces its ubiquitination and subsequent degradation. Ubiquitinated by the CRL2(FEM1B) complex, which recognizes the -Gly-Leu-Asp-Arg C-degron at the C-terminus, leading to its degradation. Post-translationally, phosphorylation at Ser-8 and Thr-138 by CDK5 prevents calpain-mediated proteolysis. In terms of tissue distribution, brain and neuron specific.

Its subcellular location is the cell membrane. The protein localises to the cell projection. It is found in the neuron projection. It localises to the nucleus. The protein resides in the cytoplasm. Its subcellular location is the perinuclear region. The protein localises to the perikaryon. In terms of biological role, p35 is a neuron specific activator of CDK5. The complex p35/CDK5 is required for neurite outgrowth and cortical lamination. Involved in dendritic spine morphogenesis by mediating the EFNA1-EPHA4 signaling. Activator of TPKII. The complex p35/CDK5 participates in the regulation of the circadian clock by modulating the function of CLOCK protein: phosphorylates CLOCK at 'Thr-451' and 'Thr-461' and regulates the transcriptional activity of the CLOCK-BMAL1 heterodimer in association with altered stability and subcellular distribution. In Homo sapiens (Human), this protein is Cyclin-dependent kinase 5 activator 1 (CDK5R1).